Consider the following 192-residue polypeptide: Erythropoietin (192 aa).

The signal sequence occupies residues 1–26; that stretch reads MGVPERPTLLLLLSLLLLPLGLPVLC. Cys33 and Cys187 are oxidised to a cystine. N-linked (GlcNAc...) asparagine glycosylation is found at Asn50, Asn64, and Asn109.

This sequence belongs to the EPO/TPO family. In terms of tissue distribution, produced by kidney or liver of adult mammals and by liver of fetal or neonatal mammals.

Its subcellular location is the secreted. Its function is as follows. Hormone involved in the regulation of erythrocyte proliferation and differentiation and the maintenance of a physiological level of circulating erythrocyte mass. Binds to EPOR leading to EPOR dimerization and JAK2 activation thereby activating specific downstream effectors, including STAT1 and STAT3. The chain is Erythropoietin (EPO) from Alexandromys oeconomus (Tundra vole).